Reading from the N-terminus, the 391-residue chain is 3-ketoacyl-CoA thiolase (391 aa).

The Acyl-thioester intermediate role is filled by Cys-95. Residues His-347 and Cys-377 each act as proton acceptor in the active site.

This sequence belongs to the thiolase-like superfamily. Thiolase family. As to quaternary structure, heterotetramer of two alpha chains (FadB) and two beta chains (FadA).

The protein localises to the cytoplasm. The catalysed reaction is an acyl-CoA + acetyl-CoA = a 3-oxoacyl-CoA + CoA. Its pathway is lipid metabolism; fatty acid beta-oxidation. Functionally, catalyzes the final step of fatty acid oxidation in which acetyl-CoA is released and the CoA ester of a fatty acid two carbons shorter is formed. This Pseudomonas fluorescens (strain ATCC BAA-477 / NRRL B-23932 / Pf-5) protein is 3-ketoacyl-CoA thiolase.